The chain runs to 550 residues: Zinc finger protein squeeze (550 aa).

Over residues Gln-73 to Gln-105 the composition is skewed to low complexity. Residues Gln-73–Ser-179 are disordered. The segment covering Gln-106–Lys-117 has biased composition (basic residues). The segment covering Arg-141–Ser-156 has biased composition (polar residues). Residues Ser-164 to Gly-176 show a composition bias toward gly residues. 5 consecutive C2H2-type zinc fingers follow at residues Tyr-182–His-204, Tyr-210–His-232, Tyr-238–His-262, Phe-268–His-290, and His-299–His-321. Positions Leu-399 to Arg-485 are disordered. Residues Gln-400 to Gln-416 show a composition bias toward low complexity. Thr-424 carries the phosphothreonine modification. Residues Ser-428 and Ser-430 each carry the phosphoserine modification. Residues Gln-444 to Pro-460 are compositionally biased toward low complexity. A phosphotyrosine mark is found at Tyr-494 and Tyr-496.

It belongs to the krueppel C2H2-type zinc-finger protein family. In terms of assembly, interacts with nab; which acts as a coactivator. Interacts with ap.

It localises to the nucleus. Its function is as follows. Transcription factor involved in neuronal fate specification. First required in embryonic CNS development to define the number of cells that express apterous (ap) in the ap thoracic cluster of interneurons. Later on, it plays a central role in the combinatorial code of transcription factors that specifies the fate of the Tv neuron in the ap cluster by participating in the transcription regulation of FMRFa in Tv cells. Also required for projection neuron dendritic targeting. The chain is Zinc finger protein squeeze (sqz) from Drosophila pseudoobscura pseudoobscura (Fruit fly).